A 323-amino-acid chain; its full sequence is NADH-ubiquinone oxidoreductase chain 1 (323 aa).

8 helical membrane-spanning segments follow: residues leucine 8–isoleucine 28, leucine 74–leucine 94, leucine 105–glycine 125, serine 150–phenylalanine 170, threonine 176–alanine 196, leucine 227–phenylalanine 247, glutamate 258–valine 278, and phenylalanine 298–serine 318.

It belongs to the complex I subunit 1 family.

The protein localises to the mitochondrion inner membrane. The enzyme catalyses a ubiquinone + NADH + 5 H(+)(in) = a ubiquinol + NAD(+) + 4 H(+)(out). Functionally, core subunit of the mitochondrial membrane respiratory chain NADH dehydrogenase (Complex I) that is believed to belong to the minimal assembly required for catalysis. Complex I functions in the transfer of electrons from NADH to the respiratory chain. The immediate electron acceptor for the enzyme is believed to be ubiquinone. This chain is NADH-ubiquinone oxidoreductase chain 1 (MT-ND1), found in Latimeria chalumnae (Coelacanth).